Consider the following 113-residue polypeptide: Pancreatic progenitor cell differentiation and proliferation factor A (113 aa).

Belongs to the PPDPF family.

Probable regulator of exocrine pancreas development. In Xenopus laevis (African clawed frog), this protein is Pancreatic progenitor cell differentiation and proliferation factor A (ppdpf-a).